Reading from the N-terminus, the 188-residue chain is dCTP deaminase (188 aa).

DCTP contacts are provided by residues 111-116 (KSTYAR), 135-137 (TLE), Q156, Y170, K179, and Q180. E137 (proton donor/acceptor) is an active-site residue.

It belongs to the dCTP deaminase family. Homotrimer.

The catalysed reaction is dCTP + H2O + H(+) = dUTP + NH4(+). The protein operates within pyrimidine metabolism; dUMP biosynthesis; dUMP from dCTP (dUTP route): step 1/2. Catalyzes the deamination of dCTP to dUTP. This is dCTP deaminase from Orientia tsutsugamushi (strain Ikeda) (Rickettsia tsutsugamushi).